We begin with the raw amino-acid sequence, 321 residues long: Ribose-phosphate pyrophosphokinase (321 aa).

ATP contacts are provided by residues 44–46 (DGE) and 103–104 (RQ). The Mg(2+) site is built by H137 and D179. K202 is a catalytic residue. Residues R204, D228, and 232-236 (DTAGT) contribute to the D-ribose 5-phosphate site.

This sequence belongs to the ribose-phosphate pyrophosphokinase family. Class I subfamily. Homohexamer. The cofactor is Mg(2+).

The protein resides in the cytoplasm. The catalysed reaction is D-ribose 5-phosphate + ATP = 5-phospho-alpha-D-ribose 1-diphosphate + AMP + H(+). Its pathway is metabolic intermediate biosynthesis; 5-phospho-alpha-D-ribose 1-diphosphate biosynthesis; 5-phospho-alpha-D-ribose 1-diphosphate from D-ribose 5-phosphate (route I): step 1/1. Functionally, involved in the biosynthesis of the central metabolite phospho-alpha-D-ribosyl-1-pyrophosphate (PRPP) via the transfer of pyrophosphoryl group from ATP to 1-hydroxyl of ribose-5-phosphate (Rib-5-P). The protein is Ribose-phosphate pyrophosphokinase of Staphylococcus saprophyticus subsp. saprophyticus (strain ATCC 15305 / DSM 20229 / NCIMB 8711 / NCTC 7292 / S-41).